A 493-amino-acid polypeptide reads, in one-letter code: Chitinase 1 (493 aa).

The N-terminal stretch at methionine 1 to alanine 20 is a signal peptide. One can recognise a GH18 domain in the interval valine 27–alanine 318. Residue glutamate 164 is the Proton donor of the active site.

The protein belongs to the glycosyl hydrolase 18 family. Chitinase class III subfamily.

The catalysed reaction is Random endo-hydrolysis of N-acetyl-beta-D-glucosaminide (1-&gt;4)-beta-linkages in chitin and chitodextrins.. This is Chitinase 1 (CHI1) from Rhizopus niveus.